Reading from the N-terminus, the 413-residue chain is Gamma-glutamyl phosphate reductase (413 aa).

Belongs to the gamma-glutamyl phosphate reductase family.

The protein resides in the cytoplasm. The catalysed reaction is L-glutamate 5-semialdehyde + phosphate + NADP(+) = L-glutamyl 5-phosphate + NADPH + H(+). The protein operates within amino-acid biosynthesis; L-proline biosynthesis; L-glutamate 5-semialdehyde from L-glutamate: step 2/2. In terms of biological role, catalyzes the NADPH-dependent reduction of L-glutamate 5-phosphate into L-glutamate 5-semialdehyde and phosphate. The product spontaneously undergoes cyclization to form 1-pyrroline-5-carboxylate. In Lactococcus lactis subsp. cremoris (strain MG1363), this protein is Gamma-glutamyl phosphate reductase.